Reading from the N-terminus, the 154-residue chain is Ribosomal RNA large subunit methyltransferase H (154 aa).

Residues G103 and 122–127 (FSKLTF) contribute to the S-adenosyl-L-methionine site.

The protein belongs to the RNA methyltransferase RlmH family. Homodimer.

It localises to the cytoplasm. The enzyme catalyses pseudouridine(1915) in 23S rRNA + S-adenosyl-L-methionine = N(3)-methylpseudouridine(1915) in 23S rRNA + S-adenosyl-L-homocysteine + H(+). Functionally, specifically methylates the pseudouridine at position 1915 (m3Psi1915) in 23S rRNA. This is Ribosomal RNA large subunit methyltransferase H from Caldicellulosiruptor bescii (strain ATCC BAA-1888 / DSM 6725 / KCTC 15123 / Z-1320) (Anaerocellum thermophilum).